The following is a 307-amino-acid chain: Ribonuclease Z (307 aa).

The Zn(2+) site is built by histidine 63, histidine 65, aspartate 67, histidine 68, histidine 143, aspartate 213, and histidine 271. Residue aspartate 67 is the Proton acceptor of the active site.

This sequence belongs to the RNase Z family. As to quaternary structure, homodimer. Zn(2+) serves as cofactor.

The catalysed reaction is Endonucleolytic cleavage of RNA, removing extra 3' nucleotides from tRNA precursor, generating 3' termini of tRNAs. A 3'-hydroxy group is left at the tRNA terminus and a 5'-phosphoryl group is left at the trailer molecule.. Zinc phosphodiesterase, which displays some tRNA 3'-processing endonuclease activity. Probably involved in tRNA maturation, by removing a 3'-trailer from precursor tRNA. The polypeptide is Ribonuclease Z (Lactococcus lactis subsp. lactis (strain IL1403) (Streptococcus lactis)).